A 314-amino-acid polypeptide reads, in one-letter code: Formylglycine-generating enzyme (314 aa).

Positions 1–20 (MAVAAPSPAAAAEPGPAARP) are enriched in low complexity. Residues 1–31 (MAVAAPSPAAAAEPGPAARPRSTRGQVRLPG) form a disordered region. The Ca(2+) site is built by Asn194, Ile195, Asp208, and His210. The Cu(2+) site is built by Cys272 and Cys277.

This sequence belongs to the sulfatase-modifying factor family. Cu(2+) serves as cofactor.

The enzyme catalyses L-cysteinyl-[sulfatase] + 2 a thiol + O2 = an organic disulfide + 3-oxo-L-alanyl-[sulfatase] + hydrogen sulfide + H2O + H(+). Its pathway is protein modification; sulfatase oxidation. Oxidase that catalyzes the conversion of cysteine to 3-oxoalanine on target proteins. 3-oxoalanine modification, which is also named formylglycine (fGly), occurs in the maturation of arylsulfatases and some alkaline phosphatases that use the hydrated form of 3-oxoalanine as a catalytic nucleophile. The protein is Formylglycine-generating enzyme of Streptomyces coelicolor (strain ATCC BAA-471 / A3(2) / M145).